A 96-amino-acid polypeptide reads, in one-letter code: Protein Vpr (96 aa).

Positions 1 to 42 are homooligomerization; it reads MEQAPEDQGPQREPYNEWTLELLEELKSEAVRHFPRIWLHNL. 3 positions are modified to phosphoserine; by host: serine 79, serine 94, and serine 96.

This sequence belongs to the HIV-1 VPR protein family. Homooligomer, may form homodimer. Interacts with p6-gag region of the Pr55 Gag precursor protein through a (Leu-X-X)4 motif near the C-terminus of the P6gag protein. Interacts with host UNG. May interact with host RAD23A/HHR23A. Interacts with host VPRBP/DCAF1, leading to hijack the CUL4A-RBX1-DDB1-DCAF1/VPRBP complex, mediating ubiquitination of host proteins such as TERT and ZGPAT and arrest of the cell cycle in G2 phase. Post-translationally, phosphorylated on several residues by host. These phosphorylations regulate VPR activity for the nuclear import of the HIV-1 pre-integration complex.

It localises to the virion. Its subcellular location is the host nucleus. The protein resides in the host extracellular space. Functionally, during virus replication, may deplete host UNG protein, and incude G2-M cell cycle arrest. Acts by targeting specific host proteins for degradation by the 26S proteasome, through association with the cellular CUL4A-DDB1 E3 ligase complex by direct interaction with host VPRPB/DCAF-1. Cell cycle arrest reportedly occurs within hours of infection and is not blocked by antiviral agents, suggesting that it is initiated by the VPR carried into the virion. Additionally, VPR induces apoptosis in a cell cycle dependent manner suggesting that these two effects are mechanistically linked. Detected in the serum and cerebrospinal fluid of AIDS patient, VPR may also induce cell death to bystander cells. Its function is as follows. During virus entry, plays a role in the transport of the viral pre-integration (PIC) complex to the host nucleus. This function is crucial for viral infection of non-dividing macrophages. May act directly at the nuclear pore complex, by binding nucleoporins phenylalanine-glycine (FG)-repeat regions. This is Protein Vpr from Homo sapiens (Human).